Here is a 94-residue protein sequence, read N- to C-terminus: Co-chaperonin GroES (94 aa).

Belongs to the GroES chaperonin family. As to quaternary structure, heptamer of 7 subunits arranged in a ring. Interacts with the chaperonin GroEL.

It is found in the cytoplasm. Its function is as follows. Together with the chaperonin GroEL, plays an essential role in assisting protein folding. The GroEL-GroES system forms a nano-cage that allows encapsulation of the non-native substrate proteins and provides a physical environment optimized to promote and accelerate protein folding. GroES binds to the apical surface of the GroEL ring, thereby capping the opening of the GroEL channel. The chain is Co-chaperonin GroES from Lactococcus lactis subsp. cremoris (strain MG1363).